A 204-amino-acid polypeptide reads, in one-letter code: Ubiquitin-conjugating enzyme E2 T (204 aa).

Residues 2–152 (QRASRLKKEL…AKQWTEAHAR (151 aa)) form the UBC core domain. The active-site Glycyl thioester intermediate is the Cys-86. Glycyl lysine isopeptide (Lys-Gly) (interchain with G-Cter in ubiquitin) cross-links involve residues Lys-91 and Lys-181. The segment at 150-204 (HARQKQKADEEELGTSSEVGDSEESHSTQKRKARPLGGMEKKFSPDVQRVYPGPS) is disordered. Glycyl lysine isopeptide (Lys-Gly) (interchain with G-Cter in SUMO2) cross-links involve residues Lys-190 and Lys-191. Residue Ser-193 is modified to Phosphoserine.

This sequence belongs to the ubiquitin-conjugating enzyme family. In terms of assembly, interacts with FANCL and BRCA1. In terms of processing, auto-ubiquitinated. Effects of auto-monoubiquitination at Lys-91 and Lys-181 are unclear.

The protein resides in the nucleus. It catalyses the reaction S-ubiquitinyl-[E1 ubiquitin-activating enzyme]-L-cysteine + [E2 ubiquitin-conjugating enzyme]-L-cysteine = [E1 ubiquitin-activating enzyme]-L-cysteine + S-ubiquitinyl-[E2 ubiquitin-conjugating enzyme]-L-cysteine.. The protein operates within protein modification; protein ubiquitination. Functionally, accepts ubiquitin from the E1 complex and catalyzes its covalent attachment to other proteins. Catalyzes monoubiquitination. Involved in mitomycin-C (MMC)-induced DNA repair: acts as a specific E2 ubiquitin-conjugating enzyme for the Fanconi anemia complex by associating with E3 ubiquitin-protein ligase FANCL and catalyzing monoubiquitination of FANCD2, a key step in the DNA damage pathway. Also mediates monoubiquitination of FANCL and FANCI. May contribute to ubiquitination and degradation of BRCA1. In vitro able to promote polyubiquitination using all 7 ubiquitin Lys residues, but may prefer 'Lys-11'-, 'Lys-27'-, 'Lys-48'- and 'Lys-63'-linked polyubiquitination. The polypeptide is Ubiquitin-conjugating enzyme E2 T (Ube2t) (Mus musculus (Mouse)).